Reading from the N-terminus, the 293-residue chain is MLVLTQPFLLMPRKLWVSSALRSDDQKQPPFSSSSTHAETPEHAEEQYQQQQSPPRYTDQAGEESEDYESEEQLQQRILTAALQFVPDFGWSADAIAEGAKSLDMSAAAGGMFEDGGSELVLHFVTQCNLQLTELLEKEHKLVQLGTSEKKPTAQFLRDAVKARLRMHIPYIEQWPQALGMLLLPRNIPSSLKLLSAMVDDMWHYAGDQSTDVSWYTSRAVLTGIYNSTELVMLQDSSPDFEDTWKFLENRISEAMTMGNSMKQVASTGEAVIQGLMGAAVTLKNLTGLNQRR.

Positions 21–73 (LRSDDQKQPPFSSSSTHAETPEHAEEQYQQQQSPPRYTDQAGEESEDYESEEQ) are disordered. A compositionally biased stretch (polar residues) spans 29-38 (PPFSSSSTHA). The span at 61-72 (AGEESEDYESEE) shows a compositional bias: acidic residues. Residue arginine 219 coordinates a 1,2-diacylglycero-3-phosphoethanolamine.

This sequence belongs to the COQ9 family. In terms of assembly, homodimer. Heterodimer; two heterodimers of COQ7:COQ9 come together on the same side of the lipid pseudo-bilayer and form a curved tetramer with a hydrophobic surface suitable for membrane interaction. These two tetramers assemble into a soluble octamer with a pseudo-bilayer of lipids captured within. Interacts with COQ7; this interaction allows ubiquinone (CoQ) isoprene intermediates presentation to COQ7 and facilitates the COQ7-mediated hydroxylase step.

It localises to the mitochondrion. Its pathway is cofactor biosynthesis; ubiquinone biosynthesis. Its function is as follows. Membrane-associated protein that warps the membrane surface to access and bind aromatic isoprenes with high specificity, including ubiquinone (CoQ) isoprene intermediates and presents them directly to COQ7, therefore facilitating the COQ7-mediated hydroxylase step. Participates in the biosynthesis of coenzyme Q, also named ubiquinone, an essential lipid-soluble electron transporter for aerobic cellular respiration. This is Ubiquinone biosynthesis protein COQ9-B, mitochondrial (coq9-b) from Xenopus laevis (African clawed frog).